The following is a 205-amino-acid chain: ATP phosphoribosyltransferase (205 aa).

Belongs to the ATP phosphoribosyltransferase family. Short subfamily. Heteromultimer composed of HisG and HisZ subunits.

It is found in the cytoplasm. It carries out the reaction 1-(5-phospho-beta-D-ribosyl)-ATP + diphosphate = 5-phospho-alpha-D-ribose 1-diphosphate + ATP. Its pathway is amino-acid biosynthesis; L-histidine biosynthesis; L-histidine from 5-phospho-alpha-D-ribose 1-diphosphate: step 1/9. Its function is as follows. Catalyzes the condensation of ATP and 5-phosphoribose 1-diphosphate to form N'-(5'-phosphoribosyl)-ATP (PR-ATP). Has a crucial role in the pathway because the rate of histidine biosynthesis seems to be controlled primarily by regulation of HisG enzymatic activity. The chain is ATP phosphoribosyltransferase from Nitratiruptor sp. (strain SB155-2).